A 129-amino-acid chain; its full sequence is Small ribosomal subunit protein uS11 (129 aa).

It belongs to the universal ribosomal protein uS11 family. As to quaternary structure, part of the 30S ribosomal subunit. Interacts with proteins S7 and S18. Binds to IF-3.

Located on the platform of the 30S subunit, it bridges several disparate RNA helices of the 16S rRNA. Forms part of the Shine-Dalgarno cleft in the 70S ribosome. The protein is Small ribosomal subunit protein uS11 of Desulfitobacterium hafniense (strain DSM 10664 / DCB-2).